We begin with the raw amino-acid sequence, 501 residues long: 5-beta-cholestane-3-alpha,7-alpha-diol 12-alpha-hydroxylase (501 aa).

The chain crosses the membrane as a helical span at residues 1–21 (MVLWGPVLGVLLVAIVGYLCL). Ser326 bears the Phosphoserine mark. Position 440 (Cys440) interacts with heme.

The protein belongs to the cytochrome P450 family. Heme serves as cofactor.

The protein resides in the endoplasmic reticulum membrane. Its subcellular location is the microsome membrane. The catalysed reaction is 7alpha-hydroxycholest-4-en-3-one + reduced [NADPH--hemoprotein reductase] + O2 = 7alpha,12alpha-dihydroxycholest-4-en-3-one + oxidized [NADPH--hemoprotein reductase] + H2O + H(+). The enzyme catalyses 5beta-cholestane-3alpha,7alpha-diol + reduced [NADPH--hemoprotein reductase] + O2 = 5beta-cholestane-3alpha,7alpha,12alpha-triol + oxidized [NADPH--hemoprotein reductase] + H2O + H(+). It catalyses the reaction chenodeoxycholate + reduced [NADPH--hemoprotein reductase] + O2 = cholate + oxidized [NADPH--hemoprotein reductase] + H2O + H(+). It functions in the pathway lipid metabolism; bile acid biosynthesis. Its function is as follows. A cytochrome P450 monooxygenase involved in primary bile acid biosynthesis. Catalyzes the 12alpha-hydroxylation of 7alpha-hydroxy-4-cholesten-3-one, an intermediate metabolite in cholic acid biosynthesis. Controls biliary balance of cholic acid and chenodeoxycholic acid, ultimately regulating the intestinal absorption of dietary lipids. Mechanistically, uses molecular oxygen inserting one oxygen atom into a substrate, and reducing the second into a water molecule, with two electrons provided by NADPH via cytochrome P450 reductase (CPR; NADPH--hemoprotein reductase). This Sus scrofa (Pig) protein is 5-beta-cholestane-3-alpha,7-alpha-diol 12-alpha-hydroxylase (CYP8B1).